The chain runs to 612 residues: MPAYRSRTTTHGRNMAGARGLWRATGMKDSDFGKPIIAVVNSFTQFVPGHVHLKDLGQLVAREIEAAGGVAKEFNTIAVDDGIAMGHDGMLYSLPSRELIADSVEYMVNAHCADAMVCISNCDKITPGMLMASLRLNIPTVFVSGGPMEAGKVVLHGKTHALDLVDAMVAAADDKISDEDVKVIERSACPTCGSCSGMFTANSMNCLTEALGLSLPGNGSTLATHADRKRLFVEAGHLIVDLARRYYEQDDVKALPRTIASKQAFENAMALDIAMGGSTNTVLHILAAAHEGEVDFTMADIDALSRRVPCLSKVAPAKSDVHMEDVHRAGGIMSILGELDKGGLLNRDCPTVHAETLGDAIDRWDITRTNSDTVRNFYRAAPGGIPTQVAFSQEARWDDLDTDRQNGVIRSVEHPFSKDGGLAVLKGNLAIDGCIVKTAGVDESILKFSGPARVFESQDGSVKAILANEVKAGDVVVIRYEGPKGGPGMQEMLYPTSYLKSKGLGKACALITDGRFSGGTSGLSIGHVSPEAANGGTIGLVREGDMIDIDIPNRTISLRVSEAELADRRAEQDGKGWHPTEVRKRNVTTALKAYAAFATSADRGAVRDLNAR.

Asp81 contacts Mg(2+). Cys122 serves as a coordination point for [2Fe-2S] cluster. Mg(2+)-binding residues include Asp123 and Lys124. An N6-carboxylysine modification is found at Lys124. Cys195 contacts [2Fe-2S] cluster. Glu491 lines the Mg(2+) pocket. Residue Ser517 is the Proton acceptor of the active site.

This sequence belongs to the IlvD/Edd family. As to quaternary structure, homodimer. It depends on [2Fe-2S] cluster as a cofactor. Mg(2+) is required as a cofactor.

The catalysed reaction is (2R)-2,3-dihydroxy-3-methylbutanoate = 3-methyl-2-oxobutanoate + H2O. It catalyses the reaction (2R,3R)-2,3-dihydroxy-3-methylpentanoate = (S)-3-methyl-2-oxopentanoate + H2O. It participates in amino-acid biosynthesis; L-isoleucine biosynthesis; L-isoleucine from 2-oxobutanoate: step 3/4. It functions in the pathway amino-acid biosynthesis; L-valine biosynthesis; L-valine from pyruvate: step 3/4. Its function is as follows. Functions in the biosynthesis of branched-chain amino acids. Catalyzes the dehydration of (2R,3R)-2,3-dihydroxy-3-methylpentanoate (2,3-dihydroxy-3-methylvalerate) into 2-oxo-3-methylpentanoate (2-oxo-3-methylvalerate) and of (2R)-2,3-dihydroxy-3-methylbutanoate (2,3-dihydroxyisovalerate) into 2-oxo-3-methylbutanoate (2-oxoisovalerate), the penultimate precursor to L-isoleucine and L-valine, respectively. The chain is Dihydroxy-acid dehydratase from Rhizobium etli (strain CIAT 652).